Here is a 415-residue protein sequence, read N- to C-terminus: Serine hydroxymethyltransferase (415 aa).

(6S)-5,6,7,8-tetrahydrofolate is bound by residues Leu-120 and Gly-124 to Leu-126. The residue at position 229 (Lys-229) is an N6-(pyridoxal phosphate)lysine.

The protein belongs to the SHMT family. As to quaternary structure, homodimer. Pyridoxal 5'-phosphate serves as cofactor.

Its subcellular location is the cytoplasm. The catalysed reaction is (6R)-5,10-methylene-5,6,7,8-tetrahydrofolate + glycine + H2O = (6S)-5,6,7,8-tetrahydrofolate + L-serine. It participates in one-carbon metabolism; tetrahydrofolate interconversion. It functions in the pathway amino-acid biosynthesis; glycine biosynthesis; glycine from L-serine: step 1/1. Functionally, catalyzes the reversible interconversion of serine and glycine with tetrahydrofolate (THF) serving as the one-carbon carrier. This reaction serves as the major source of one-carbon groups required for the biosynthesis of purines, thymidylate, methionine, and other important biomolecules. Also exhibits THF-independent aldolase activity toward beta-hydroxyamino acids, producing glycine and aldehydes, via a retro-aldol mechanism. The sequence is that of Serine hydroxymethyltransferase from Pelotomaculum thermopropionicum (strain DSM 13744 / JCM 10971 / SI).